The following is a 63-amino-acid chain: Large ribosomal subunit protein uL29 (63 aa).

This sequence belongs to the universal ribosomal protein uL29 family.

The chain is Large ribosomal subunit protein uL29 from Pseudomonas fluorescens (strain ATCC BAA-477 / NRRL B-23932 / Pf-5).